The following is a 148-amino-acid chain: Endoribonuclease YbeY (148 aa).

Zn(2+)-binding residues include His-105, His-109, and Asp-115.

Belongs to the endoribonuclease YbeY family. Zn(2+) is required as a cofactor.

The protein localises to the cytoplasm. In terms of biological role, single strand-specific metallo-endoribonuclease involved in late-stage 70S ribosome quality control and in maturation of the 3' terminus of the 16S rRNA. The chain is Endoribonuclease YbeY from Chlorobium phaeovibrioides (strain DSM 265 / 1930) (Prosthecochloris vibrioformis (strain DSM 265)).